Reading from the N-terminus, the 224-residue chain is Phosphoribosylformylglycinamidine synthase subunit PurQ (224 aa).

In terms of domain architecture, Glutamine amidotransferase type-1 spans 4-224 (RIGIITFPGT…YSVLDGVLAG (221 aa)). Catalysis depends on C87, which acts as the Nucleophile. Active-site residues include H195 and E197.

In terms of assembly, part of the FGAM synthase complex composed of 1 PurL, 1 PurQ and 2 PurS subunits.

The protein resides in the cytoplasm. It carries out the reaction N(2)-formyl-N(1)-(5-phospho-beta-D-ribosyl)glycinamide + L-glutamine + ATP + H2O = 2-formamido-N(1)-(5-O-phospho-beta-D-ribosyl)acetamidine + L-glutamate + ADP + phosphate + H(+). The enzyme catalyses L-glutamine + H2O = L-glutamate + NH4(+). It participates in purine metabolism; IMP biosynthesis via de novo pathway; 5-amino-1-(5-phospho-D-ribosyl)imidazole from N(2)-formyl-N(1)-(5-phospho-D-ribosyl)glycinamide: step 1/2. Part of the phosphoribosylformylglycinamidine synthase complex involved in the purines biosynthetic pathway. Catalyzes the ATP-dependent conversion of formylglycinamide ribonucleotide (FGAR) and glutamine to yield formylglycinamidine ribonucleotide (FGAM) and glutamate. The FGAM synthase complex is composed of three subunits. PurQ produces an ammonia molecule by converting glutamine to glutamate. PurL transfers the ammonia molecule to FGAR to form FGAM in an ATP-dependent manner. PurS interacts with PurQ and PurL and is thought to assist in the transfer of the ammonia molecule from PurQ to PurL. This Mycolicibacterium paratuberculosis (strain ATCC BAA-968 / K-10) (Mycobacterium paratuberculosis) protein is Phosphoribosylformylglycinamidine synthase subunit PurQ.